The chain runs to 551 residues: MATLHAYFDPANYSLFFVLGVLTHVFIFRRGEWDLHVFNILQAFAVLESSLVYIVTRAVQAQGLSLWKVTTISSCFTLSTLMGLLISILMYRSWFHRLRRFPGPFCARLSNLYITFRAFKKNRLYEEVQQLHRRYGDIVRIGPNELSIIDPHALRALHSNSSPCTKGPWYSVEHPIKALQMTRDKEEHAYRRKAWDLAFSSKALREYEARVAGYTTQLVDQIEASQSTPIDASLWFNFYSFDVMGDLAFGRTFDMLKNGTAHPFMELVHSNMLTAGSLSHLPWIFPLLKRIPLLNQKTLEFQGWLKQQVDWRQKNNPDLPDVFSWILSDYDALDKPTAQDTINLRGDAQLIAVAGSDTTAASLSCLFSELAVNPETCLNLQRELDQYHAEHDKPDHLSLSKLRYLQACIDESMRLYPAIPSGLQRMTPPEGLDIGNTYLPGDTIVTIPTYTFNRDERLFTHADKFIPERWTTKKELTKDPSNFVPFSIGQYSCVGKQLGLMETRFVASQILVKYNVRLAHEDVARDFVAGLRDGFTLAMPSLSLVFTQRTT.

Transmembrane regions (helical) follow at residues 8 to 28 (FDPANYSLFFVLGVLTHVFIF), 35 to 55 (LHVFNILQAFAVLESSLVYIV), and 69 to 89 (VTTISSCFTLSTLMGLLISIL). Asn-258 carries N-linked (GlcNAc...) asparagine glycosylation. A heme-binding site is contributed by Cys-493.

The protein belongs to the cytochrome P450 family. Heme is required as a cofactor.

It is found in the membrane. It functions in the pathway secondary metabolite biosynthesis. In terms of biological role, cytochrome P450 monooxygenase; part of the gene cluster that mediates the biosynthesis of cytokinins such as fusatin, fusatinic acids or 8-oxofusatin, known for their growth promoting and anti-senescence activities toward host plants. FCK1 is a bifunctional enzyme that performs the first steps in the biosynthesis of Fusarium cytokinins. It first condenses adenosine monophosphate (AMP) with dimethylallyl diphosphate (DMAPP) to yield isoprenyl adenosine monophosphate. It then catalyzes the removal of the phosphoribose to produce isopentenylaldehyde. The cytochrome P450 monooxygenase then converts isopentenylaldehyde to trans-zeatin. A condensation step converts trans-zeatin to fusatin which is further modified to produce fusatinic acid. The mechanism for oxidation of fusatin to fusatinic acid remains unknown. 8-oxofusatin could be produced through several pathways, via direct oxygenation of fusatin, or via the 8-oxo-pentenyladenine intermediate which itself must arise from either the prenylation of 8-oxo-AMP by FCK1 and/or oxygenation of isopentenylaldehyde. Both the FCK3 and FCK4 enzymes act downstream of the identified cytokinins to produce yet unidentified compounds. The chain is Cytochrome P450 monooxygenase FCK2 from Fusarium pseudograminearum (strain CS3096) (Wheat and barley crown-rot fungus).